Consider the following 773-residue polypeptide: 3-isopropylmalate dehydratase (773 aa).

[4Fe-4S] cluster is bound by residues C355, C415, and C418.

This sequence belongs to the aconitase/IPM isomerase family. As to quaternary structure, monomer. [4Fe-4S] cluster serves as cofactor.

The catalysed reaction is (2R,3S)-3-isopropylmalate = (2S)-2-isopropylmalate. The protein operates within amino-acid biosynthesis; L-leucine biosynthesis; L-leucine from 3-methyl-2-oxobutanoate: step 2/4. Functionally, catalyzes the isomerization between 2-isopropylmalate and 3-isopropylmalate, via the formation of 2-isopropylmaleate. This chain is 3-isopropylmalate dehydratase (LEU1), found in Mycosarcoma maydis (Corn smut fungus).